The sequence spans 436 residues: Ribulose bisphosphate carboxylase large chain (436 aa).

Substrate contacts are provided by N104 and T154. Catalysis depends on K156, which acts as the Proton acceptor. Residue K158 participates in substrate binding. The Mg(2+) site is built by K182, D184, and E185. K182 bears the N6-carboxylysine mark. H275 functions as the Proton acceptor in the catalytic mechanism. Positions 276, 308, and 360 each coordinate substrate.

The protein belongs to the RuBisCO large chain family. Type I subfamily. Heterohexadecamer of 8 large chains and 8 small chains. Mg(2+) serves as cofactor.

The protein resides in the plastid. It localises to the chloroplast. It carries out the reaction 2 (2R)-3-phosphoglycerate + 2 H(+) = D-ribulose 1,5-bisphosphate + CO2 + H2O. The catalysed reaction is D-ribulose 1,5-bisphosphate + O2 = 2-phosphoglycolate + (2R)-3-phosphoglycerate + 2 H(+). Its function is as follows. RuBisCO catalyzes two reactions: the carboxylation of D-ribulose 1,5-bisphosphate, the primary event in carbon dioxide fixation, as well as the oxidative fragmentation of the pentose substrate in the photorespiration process. Both reactions occur simultaneously and in competition at the same active site. The protein is Ribulose bisphosphate carboxylase large chain of Euglena stellata.